The sequence spans 125 residues: MDLMCKKMKHLWFFLLLVAAPRWVLSQLQLQESGPGLVKPSETLSLTCTVSGGSISSSSYYWGWIRQPPGKGLEWIGSIYYSGSTYYNPSLKSRVTISVDTSKNQFSLKLSSVTAADTAVYYCAR.

A signal peptide spans 1 to 26 (MDLMCKKMKHLWFFLLLVAAPRWVLS). A framework-1 region spans residues 27 to 51 (QLQLQESGPGLVKPSETLSLTCTVS). Positions 27–125 (QLQLQESGPG…ADTAVYYCAR (99 aa)) constitute an Ig-like domain. Cysteine 48 and cysteine 123 are oxidised to a cystine. Positions 52 to 61 (GGSISSSSYY) are complementarity-determining-1. Positions 62–78 (WGWIRQPPGKGLEWIGS) are framework-2. Residues 79 to 85 (IYYSGST) form a complementarity-determining-2 region. Residues 86–123 (YYNPSLKSRVTISVDTSKNQFSLKLSSVTAADTAVYYC) are framework-3. Residues 124–125 (AR) form a complementarity-determining-3 region.

Immunoglobulins are composed of two identical heavy chains and two identical light chains; disulfide-linked.

Its subcellular location is the secreted. The protein resides in the cell membrane. Its function is as follows. V region of the variable domain of immunoglobulin heavy chains that participates in the antigen recognition. Immunoglobulins, also known as antibodies, are membrane-bound or secreted glycoproteins produced by B lymphocytes. In the recognition phase of humoral immunity, the membrane-bound immunoglobulins serve as receptors which, upon binding of a specific antigen, trigger the clonal expansion and differentiation of B lymphocytes into immunoglobulins-secreting plasma cells. Secreted immunoglobulins mediate the effector phase of humoral immunity, which results in the elimination of bound antigens. The antigen binding site is formed by the variable domain of one heavy chain, together with that of its associated light chain. Thus, each immunoglobulin has two antigen binding sites with remarkable affinity for a particular antigen. The variable domains are assembled by a process called V-(D)-J rearrangement and can then be subjected to somatic hypermutations which, after exposure to antigen and selection, allow affinity maturation for a particular antigen. This Homo sapiens (Human) protein is Immunoglobulin heavy variable 4-39.